A 189-amino-acid polypeptide reads, in one-letter code: dCTP deaminase (189 aa).

Residues 112–117 (KSTYAR), 136–138 (TLE), glutamine 157, tyrosine 171, and glutamine 181 each bind dCTP. The active-site Proton donor/acceptor is the glutamate 138.

The protein belongs to the dCTP deaminase family. As to quaternary structure, homotrimer.

The catalysed reaction is dCTP + H2O + H(+) = dUTP + NH4(+). It functions in the pathway pyrimidine metabolism; dUMP biosynthesis; dUMP from dCTP (dUTP route): step 1/2. Catalyzes the deamination of dCTP to dUTP. The sequence is that of dCTP deaminase from Teredinibacter turnerae (strain ATCC 39867 / T7901).